Here is a 438-residue protein sequence, read N- to C-terminus: Adenylosuccinate synthetase (438 aa).

GTP-binding positions include 13–19 (GDEGKGK) and 41–43 (GHT). Catalysis depends on aspartate 14, which acts as the Proton acceptor. Residues aspartate 14 and glycine 41 each coordinate Mg(2+). IMP contacts are provided by residues 14–17 (DEGK), 39–42 (NAGH), threonine 130, arginine 144, glutamine 225, threonine 240, and arginine 312. Residue histidine 42 is the Proton donor of the active site. 308-314 (ATTGRQR) serves as a coordination point for substrate. Residues arginine 314, 340–342 (KLD), and 422–424 (STG) each bind GTP.

This sequence belongs to the adenylosuccinate synthetase family. In terms of assembly, homodimer. Mg(2+) serves as cofactor.

Its subcellular location is the cytoplasm. It catalyses the reaction IMP + L-aspartate + GTP = N(6)-(1,2-dicarboxyethyl)-AMP + GDP + phosphate + 2 H(+). Its pathway is purine metabolism; AMP biosynthesis via de novo pathway; AMP from IMP: step 1/2. Plays an important role in the de novo pathway of purine nucleotide biosynthesis. Catalyzes the first committed step in the biosynthesis of AMP from IMP. The sequence is that of Adenylosuccinate synthetase from Vesicomyosocius okutanii subsp. Calyptogena okutanii (strain HA).